Reading from the N-terminus, the 105-residue chain is Translation initiation factor 1A (105 aa).

The region spanning 18–92 (IRVKLPNKRI…DKCDIIYRYT (75 aa)) is the S1-like domain.

It belongs to the eIF-1A family.

Seems to be required for maximal rate of protein biosynthesis. Enhances ribosome dissociation into subunits and stabilizes the binding of the initiator Met-tRNA(I) to 40 S ribosomal subunits. The protein is Translation initiation factor 1A (eIF1A) of Methanocorpusculum labreanum (strain ATCC 43576 / DSM 4855 / Z).